The sequence spans 330 residues: tRNA-modifying protein YgfZ (330 aa).

Folate contacts are provided by W28 and W190.

The protein belongs to the tRNA-modifying YgfZ family.

It localises to the cytoplasm. Functionally, folate-binding protein involved in regulating the level of ATP-DnaA and in the modification of some tRNAs. It is probably a key factor in regulatory networks that act via tRNA modification, such as initiation of chromosomal replication. The sequence is that of tRNA-modifying protein YgfZ from Yersinia enterocolitica serotype O:8 / biotype 1B (strain NCTC 13174 / 8081).